We begin with the raw amino-acid sequence, 374 residues long: Translocating chain-associated membrane protein 1 (374 aa).

At 2 to 29 (AIRKKSTKSPPVLSHEFILQNHADIVSC) the chain is on the cytoplasmic side. The helical transmembrane segment at 30-50 (VAMVFLLGLMFEITAKASIIF) threads the bilayer. Residues 51 to 76 (VTLQYNVTLPATEEQATESTSLYYYG) are Lumenal-facing. N-linked (GlcNAc...) asparagine glycosylation occurs at Asn-56. Residues 77 to 97 (IKDLATVFFYMLVAIIIHAII) traverse the membrane as a helical segment. Topologically, residues 98-121 (QEYVLDKINRRMHFSKTKHSKFNE) are cytoplasmic. Residues 117–326 (SKFNESGQLS…NFQLRRWREH (210 aa)) enclose the TLC domain. The chain crosses the membrane as a helical span at residues 122–142 (SGQLSAFYLFSCIWGTFILIS). Residues 143–159 (ENYISDPTILWRAYPHN) are Lumenal-facing. A helical membrane pass occupies residues 160–180 (LMTFQMKFFYIAQLAYWFHAF). Over 181-192 (PELYFQKTKKED) the chain is Cytoplasmic. Residues 193–213 (IPRQLVYIGLYLFHIAGAYLL) form a helical membrane-spanning segment. The Lumenal portion of the chain corresponds to 214 to 217 (NLNH). The helical transmembrane segment at 218 to 238 (LGLVLLVLHYFVEFLFHISRL) threads the bilayer. The Cytoplasmic segment spans residues 239 to 251 (FYFSDEKYQKGFS). Residues 252 to 272 (LWAVLFVLGRLLTLILSVLTV) form a helical membrane-spanning segment. Residues 273-297 (GFGLARAENQKLDFSAGNFNVLAVR) lie on the Lumenal side of the membrane. A helical transmembrane segment spans residues 298 to 318 (IAVLASICITQAFMMWKFINF). The Cytoplasmic portion of the chain corresponds to 319 to 374 (QLRRWREHSTFQAPVVKKKPTVTKGRSSRKGTENGVNGTVTSNGADSPRNRKEKSS). A compositionally biased stretch (basic residues) spans 334–347 (VKKKPTVTKGRSSR). The tract at residues 334-374 (VKKKPTVTKGRSSRKGTENGVNGTVTSNGADSPRNRKEKSS) is disordered. Over residues 352 to 363 (NGVNGTVTSNGA) the composition is skewed to polar residues. Residue Ser-365 is modified to Phosphoserine.

Belongs to the TRAM family. In terms of assembly, interacts with SEC61B. May interact with Derlin-1/DERL1. N-glycosylated.

It localises to the endoplasmic reticulum membrane. Involved in the translocation of nascent protein chains into or through the endoplasmic reticulum (ER) membrane by facilitating the proper chain positioning at the SEC61 channel. Regulates the exposure of nascent secretory protein chain to the cytosol during translocation into the ER. May affect the phospholipid bilayer in the vicinity of the lateral gate of the SEC61 channel, thereby facilitating ER protein transport. Intimately associates with transmembrane (TM) domain of nascent membrane proteins during the entire integration process into the ER membrane. Associates with the second TM domain of G-protein-coupled receptor opsin/OPSD nascent chain in the ER membrane, which may facilitate its integration into the membrane. Under conditions of ER stress, participates in the disposal of misfolded ER membrane proteins during the unfolded protein response (UPR), an integrated stress response (ISR) pathway, by selectively retrotranslocating misfolded ER-membrane proteins from the ER into the cytosol where they are ubiquitinated and degraded by the proteasome. The polypeptide is Translocating chain-associated membrane protein 1 (TRAM1) (Canis lupus familiaris (Dog)).